Consider the following 619-residue polypeptide: MYNPVDAVLTKIITNYGIDSFTLRYAICLLGSFPLNAILKRIPEKRIGLKCCFIISMSMFYLFGVLNLVSGFRTLFISTMFTYLISRFYRSKFMPHLNFMFVMGHLAINHIHAQFLNEQTQTTVDITSSQMVLAMKLTSFAWSYYDGSCTSESDFKDLTEHQKSRAVRGHPPLLKFLAYAFFYSTLLTGPSFDYADFDSWLNCEMFRDLPESKKPMRRHHPGERRQIPKNGKLALWKVVQGLAWMILSTLGMKHFPVKYVLDKDGFPTRSFIFRIHYLFLLGFIHRFKYYAAWTISEGSCILCGLGYNGYDSKTQKIRWDRVRNIDIWTVETAQNTREMLEAWNMNTNKWLKYSVYLRVTKKGKKPGFRSTLFTFLTSAFWHGTRPGYYLTFATGALYQTCGKIYRRNFRPIFLREDGVTPLPSKKIYDLVGIYAIKLAFGYMVQPFIILDLKPSLMVWGSVYFYVHIIVAFSFFLFRGPYAKQVTEFFKSKQPKEIFIRKQKKLEKDISASSPNLGGILKAKIEHEKGKTAEEEEMNLGIPPIELEKWDNAKEDWEDFCKDYKEWRNKNGLEIEEENLSKAFERFKQEFSNAASGSGERVRKMSFSGYSPKPISKKEE.

Residues 1–19 are Lumenal-facing; that stretch reads MYNPVDAVLTKIITNYGID. The helical transmembrane segment at 20-39 threads the bilayer; that stretch reads SFTLRYAICLLGSFPLNAIL. The Cytoplasmic portion of the chain corresponds to 40–51; that stretch reads KRIPEKRIGLKC. The chain crosses the membrane as a helical span at residues 52–72; it reads CFIISMSMFYLFGVLNLVSGF. Residues 73-92 are Lumenal-facing; sequence RTLFISTMFTYLISRFYRSK. The helical transmembrane segment at 93 to 113 threads the bilayer; the sequence is FMPHLNFMFVMGHLAINHIHA. The Cytoplasmic segment spans residues 114–231; that stretch reads QFLNEQTQTT…GERRQIPKNG (118 aa). Residue D146 is the Nucleophile of the active site. The chain crosses the membrane as a helical span at residues 232–252; it reads KLALWKVVQGLAWMILSTLGM. The Lumenal segment spans residues 253–274; it reads KHFPVKYVLDKDGFPTRSFIFR. Residues 275-295 traverse the membrane as a helical segment; sequence IHYLFLLGFIHRFKYYAAWTI. Residues 296 to 429 lie on the Cytoplasmic side of the membrane; that stretch reads SEGSCILCGL…TPLPSKKIYD (134 aa). E297 acts as the Nucleophile in catalysis. H382 is an active-site residue. The chain crosses the membrane as a helical span at residues 430–450; sequence LVGIYAIKLAFGYMVQPFIIL. At 451 to 456 the chain is on the lumenal side; that stretch reads DLKPSL. Residues 457 to 477 traverse the membrane as a helical segment; sequence MVWGSVYFYVHIIVAFSFFLF. The Cytoplasmic segment spans residues 478–619; that stretch reads RGPYAKQVTE…SPKPISKKEE (142 aa). The residue at position 513 (S513) is a Phosphoserine. A coiled-coil region spans residues 545-593; sequence ELEKWDNAKEDWEDFCKDYKEWRNKNGLEIEEENLSKAFERFKQEFSNA. The disordered stretch occupies residues 592–619; the sequence is NAASGSGERVRKMSFSGYSPKPISKKEE. 3 positions are modified to phosphoserine: S605, S610, and S615.

It belongs to the membrane-bound acyltransferase family.

The protein localises to the endoplasmic reticulum membrane. The catalysed reaction is a 1-acyl-sn-glycero-3-phosphate + an acyl-CoA = a 1,2-diacyl-sn-glycero-3-phosphate + CoA. The enzyme catalyses a 1-acyl-sn-glycero-3-phosphocholine + an acyl-CoA = a 1,2-diacyl-sn-glycero-3-phosphocholine + CoA. It carries out the reaction 1-acyl-sn-glycero-3-phospho-(1'-sn-glycerol) + an acyl-CoA = a 1,2-diacyl-sn-glycero-3-phospho-(1'-sn-glycerol) + CoA. It catalyses the reaction a 1-acyl-sn-glycero-3-phospho-(1D-myo-inositol) + an acyl-CoA = a 1,2-diacyl-sn-glycero-3-phospho-(1D-myo-inositol) + CoA. The catalysed reaction is a 1-acyl-sn-glycero-3-phospho-L-serine + an acyl-CoA = a 1,2-diacyl-sn-glycero-3-phospho-L-serine + CoA. The enzyme catalyses a 1-acyl-sn-glycero-3-phosphoethanolamine + an acyl-CoA = a 1,2-diacyl-sn-glycero-3-phosphoethanolamine + CoA. It carries out the reaction 1-(9Z-octadecenoyl)-sn-glycero-3-phosphoethanolamine + (9Z)-octadecenoyl-CoA = 1,2-di-(9Z-octadecenoyl)-sn-glycero-3-phosphoethanolamine + CoA. It catalyses the reaction 1-(9Z-octadecenoyl)-sn-glycero-3-phosphoethanolamine + (9Z)-hexadecenoyl-CoA = 1-(9Z)-octadecenoyl-2-(9Z)-hexadecenoyl-sn-glycero-3-phosphoethanolamine + CoA. The catalysed reaction is 1-(9Z-octadecenoyl)-sn-glycero-3-phosphoethanolamine + hexadecanoyl-CoA = 1-(9Z-octadecenoyl)-2-hexadecanoyl-sn-glycero-3-phosphoethanolamine + CoA. The enzyme catalyses 1-(9Z-octadecenoyl)-sn-glycero-3-phosphoethanolamine + tetradecanoyl-CoA = 1-(9Z)-octadecenoyl-2-tetradecanoyl-sn-glycero-3-phosphoethanolamine + CoA. It carries out the reaction 1-(9Z-octadecenoyl)-sn-glycero-3-phosphate + (9Z)-octadecenoyl-CoA = 1,2-di-(9Z-octadecenoyl)-sn-glycero-3-phosphate + CoA. It catalyses the reaction (9Z)-hexadecenoyl-CoA + 1-hexadecanoyl-sn-glycero-3-phosphocholine = 1-hexadecanoyl-2-(9Z-hexadecenoyl)-sn-glycero-3-phosphocholine + CoA. The catalysed reaction is 1-hexadecanoyl-sn-glycero-3-phosphocholine + (9Z)-octadecenoyl-CoA = 1-hexadecanoyl-2-(9Z-octadecenoyl)-sn-glycero-3-phosphocholine + CoA. The enzyme catalyses 1-tetradecanoyl-sn-glycero-3-phosphoethanolamine + (9Z)-octadecenoyl-CoA = 1-tetradecanoyl-2-(9Z-octadecenoyl)-sn-glycero-3-phosphoethanolamine + CoA. It carries out the reaction 1-(9Z-octadecenoyl)-sn-glycero-3-phospho-L-serine + (9Z)-octadecenoyl-CoA = 1,2-di-(9Z)-octadecenoyl-sn-glycero-3-phospho-L-serine + CoA. It catalyses the reaction a 1-acyl-sn-glycero-3-phospho-(1D-myo-inositol) + (9Z)-octadecenoyl-CoA = a 1-acyl-2-(9Z-octadecenoyl)-sn-glycero-3-phospho-(1D-myo-inositol) + CoA. It participates in lipid metabolism; phospholipid metabolism. Functionally, broad specificity membrane-bound O-acyltransferase that mediates the incorporation of unsaturated acyl chains into the sn-2 position of various lysophospholipids. Preferentially acylates lysophosphocholine (LPC), but also lysophosphoethanolamine (LPE), lysophosphatidylglycerol (LPG), lysophosphatidic acid (LPA), lysophosphoethanolamine (LPE), lysophosphoinositol (LPI), and lysophosphoserine (LPS). Prefers an acyl residue to an alkyl residue at the sn-1 position of lysophospholipid acceptors. Accepts acyl chains in acyl-CoA from C-2 to C-20, and shows strong preference for unsaturated acyl-CoAs with 16-20 carbons. Together with SLC1, plays a central role in phosphatidic acid (PA) biosynthesis. PA is the intermediate, from which all glycerophospholipids are synthesized. Can also introduce an acyl chain at the sn-1 position of the lysophosphatidylcholine analog 1-hydroxy-2-hexadecyl-sn-glycero-3-phosphocholine (HHPC). In Saccharomyces cerevisiae (strain ATCC 204508 / S288c) (Baker's yeast), this protein is Lysophospholipid acyltransferase.